We begin with the raw amino-acid sequence, 253 residues long: Imidazole glycerol phosphate synthase subunit HisF (253 aa).

Residues Asp-11 and Asp-130 contribute to the active site.

This sequence belongs to the HisA/HisF family. As to quaternary structure, heterodimer of HisH and HisF.

The protein localises to the cytoplasm. The enzyme catalyses 5-[(5-phospho-1-deoxy-D-ribulos-1-ylimino)methylamino]-1-(5-phospho-beta-D-ribosyl)imidazole-4-carboxamide + L-glutamine = D-erythro-1-(imidazol-4-yl)glycerol 3-phosphate + 5-amino-1-(5-phospho-beta-D-ribosyl)imidazole-4-carboxamide + L-glutamate + H(+). The protein operates within amino-acid biosynthesis; L-histidine biosynthesis; L-histidine from 5-phospho-alpha-D-ribose 1-diphosphate: step 5/9. Its function is as follows. IGPS catalyzes the conversion of PRFAR and glutamine to IGP, AICAR and glutamate. The HisF subunit catalyzes the cyclization activity that produces IGP and AICAR from PRFAR using the ammonia provided by the HisH subunit. This is Imidazole glycerol phosphate synthase subunit HisF from Dehalococcoides mccartyi (strain CBDB1).